A 241-amino-acid chain; its full sequence is 3-oxoacyl-[acyl-carrier-protein] reductase FabG (241 aa).

NADP(+)-binding positions include 13–16 (GASG), S38, 57–58 (EI), and N83. S135 is a binding site for substrate. Y148 serves as the catalytic Proton acceptor. NADP(+)-binding positions include 148–152 (YCASK) and I181.

This sequence belongs to the short-chain dehydrogenases/reductases (SDR) family. As to quaternary structure, homotetramer.

The catalysed reaction is a (3R)-hydroxyacyl-[ACP] + NADP(+) = a 3-oxoacyl-[ACP] + NADPH + H(+). The protein operates within lipid metabolism; fatty acid biosynthesis. Its function is as follows. Catalyzes the NADPH-dependent reduction of beta-ketoacyl-ACP substrates to beta-hydroxyacyl-ACP products, the first reductive step in the elongation cycle of fatty acid biosynthesis. The protein is 3-oxoacyl-[acyl-carrier-protein] reductase FabG (fabG) of Rickettsia felis (strain ATCC VR-1525 / URRWXCal2) (Rickettsia azadi).